The chain runs to 286 residues: Pantothenate synthetase (286 aa).

30-37 (MGALHEGH) contacts ATP. Residue His-37 is the Proton donor of the active site. Gln-61 contacts (R)-pantoate. Residue Gln-61 participates in beta-alanine binding. 147-150 (GEKD) is an ATP binding site. Gln-153 contacts (R)-pantoate. Residues Val-180 and 188–191 (LSSR) each bind ATP.

This sequence belongs to the pantothenate synthetase family. In terms of assembly, homodimer.

Its subcellular location is the cytoplasm. The enzyme catalyses (R)-pantoate + beta-alanine + ATP = (R)-pantothenate + AMP + diphosphate + H(+). It functions in the pathway cofactor biosynthesis; (R)-pantothenate biosynthesis; (R)-pantothenate from (R)-pantoate and beta-alanine: step 1/1. Catalyzes the condensation of pantoate with beta-alanine in an ATP-dependent reaction via a pantoyl-adenylate intermediate. The protein is Pantothenate synthetase of Novosphingobium aromaticivorans (strain ATCC 700278 / DSM 12444 / CCUG 56034 / CIP 105152 / NBRC 16084 / F199).